Reading from the N-terminus, the 460-residue chain is Cyclin-A1-1 (460 aa).

2 disordered regions span residues 1–52 and 95–126; these read MSNI…ITNQ and PHKVASSPSKSDDGSVSMDETRSSSDSYKSPQ. 2 stretches are compositionally biased toward low complexity: residues 10 to 19 and 100 to 111; these read SSFSSSTKSS and SSPSKSDDGSVS.

The protein belongs to the cyclin family. Cyclin AB subfamily. In terms of assembly, interacts with FZR2/CCS52A1, FZR1/CCS52A2 and FZR3/CCS52B.

The sequence is that of Cyclin-A1-1 (CYCA1-1) from Arabidopsis thaliana (Mouse-ear cress).